A 301-amino-acid chain; its full sequence is GTPase Era (301 aa).

Residues 7 to 175 (YCGFVAIVGR…AAIVRKHLPE (169 aa)) form the Era-type G domain. The segment at 15–22 (GRPNVGKS) is G1. 15–22 (GRPNVGKS) is a binding site for GTP. Residues 41–45 (QTTRH) form a G2 region. Residues 62–65 (DTPG) are G3. GTP contacts are provided by residues 62-66 (DTPGL) and 124-127 (NKVD). A G4 region spans residues 124 to 127 (NKVD). The interval 154–156 (ISA) is G5. Residues 206–283 (LGAELPYSVT…HLELWVKVKS (78 aa)) enclose the KH type-2 domain.

Belongs to the TRAFAC class TrmE-Era-EngA-EngB-Septin-like GTPase superfamily. Era GTPase family. As to quaternary structure, monomer.

It is found in the cytoplasm. The protein resides in the cell inner membrane. Its function is as follows. An essential GTPase that binds both GDP and GTP, with rapid nucleotide exchange. Plays a role in 16S rRNA processing and 30S ribosomal subunit biogenesis and possibly also in cell cycle regulation and energy metabolism. The polypeptide is GTPase Era (Klebsiella pneumoniae subsp. pneumoniae (strain ATCC 700721 / MGH 78578)).